The chain runs to 641 residues: MGKIIGIDLGTTNSCVSIMDGGKARVIENSEGDRTTPSIVAYTKDGEVLVGASAKRQAVTNPKNTFYAVKRLIGRKFTDGEVQKDISHVPYGILAHDNGDAWVQTSDAKRMAPQEISARVLEKMKKTAEDFLGEKVTEAVITVPAYFNDSQRQATKDAGRIAGLDVKRIINEPTAAALAYGLDKNGGDRKIAVYDLGGGTFDVSIIEIAEVDGEKQFEVLATNGDTFLGGEDFDNRVIEYLVDEFNKDQGIDLRKDPLALQRLKDAAERAKIELSSSQQTEVNLPYVTADASGPKHLNIKLTRAKLEALVEDLVKKSIEPCRTALNDAGLRASDINEVILVGGQTRMPKVQQAVADFFGKEPRKDVNPDEAVAVGAAIQGGVLAGDVKDVLLLDVTPLSLGIETMGGVFTKIIEKNTTIPTKASQTFSTAEDNQSAVTVHVLQGEREQARFNKSLAKFDLSGIEPAPRGMPQVEVSFDIDANGILHVSAKDKKTNKEQKVEIKAGSGLSDEEIQRMVADAEANREEDKKFQELVQARNQADGLIHATRTAITEHGSKVGGDVIGKVEAALSDLETAMKGDDKAQIEARTKTLEEAGQSLYAAAAAAEQGGNADAASGNAQASKAADDVVDAEFTEVKDDKK.

The residue at position 200 (Thr200) is a Phosphothreonine; by autocatalysis. Residues 606–623 (AEQGGNADAASGNAQASK) show a composition bias toward low complexity. Positions 606 to 627 (AEQGGNADAASGNAQASKAADD) are disordered.

Belongs to the heat shock protein 70 family.

Acts as a chaperone. In Xanthomonas euvesicatoria pv. vesicatoria (strain 85-10) (Xanthomonas campestris pv. vesicatoria), this protein is Chaperone protein DnaK.